Consider the following 107-residue polypeptide: Large ribosomal subunit protein P1 (107 aa).

Residues 67 to 107 (GAAPAAAAPAAGGAPAAGAAPKKEEKKEPSEEEDMGFSLFD) form a disordered region. The segment covering 69 to 86 (APAAAAPAAGGAPAAGAA) has biased composition (low complexity).

It belongs to the eukaryotic ribosomal protein P1/P2 family. As to quaternary structure, P1 and P2 exist as dimers at the large ribosomal subunit.

In terms of biological role, plays an important role in the elongation step of protein synthesis. The chain is Large ribosomal subunit protein P1 from Chlamydomonas reinhardtii (Chlamydomonas smithii).